A 251-amino-acid chain; its full sequence is GTP cyclohydrolase 1 type 2 homolog (251 aa).

His-64, His-65, Asp-102, His-219, and Glu-223 together coordinate a divalent metal cation.

It belongs to the GTP cyclohydrolase I type 2/NIF3 family. As to quaternary structure, homohexamer.

This Chlamydia trachomatis serovar D (strain ATCC VR-885 / DSM 19411 / UW-3/Cx) protein is GTP cyclohydrolase 1 type 2 homolog.